The primary structure comprises 102 residues: Omega-hexatoxin-Hi2b (102 aa).

Residues 1 to 23 (MKFSKLSLTLALILTQAIFVLCG) form the signal peptide. The propeptide occupies 24–56 (KINEDFMENGLESHALHDEIRKPIDTEKADAER). 3 disulfide bridges follow: Cys61–Cys75, Cys68–Cys81, and Cys74–Cys86. Leu98 carries the post-translational modification Leucine amide. Residues 100 to 102 (RAL) constitute a propeptide that is removed on maturation.

Belongs to the neurotoxin 15 family. 02 (omega-actx) subfamily. Expressed by the venom gland.

It localises to the secreted. Its function is as follows. Potent inhibitor of insect, but not mammalian, voltage-gated calcium channels (Cav). This is Omega-hexatoxin-Hi2b from Hadronyche infensa (Fraser island funnel-web spider).